A 201-amino-acid chain; its full sequence is Small ribosomal subunit protein uS10m (201 aa).

This sequence belongs to the universal ribosomal protein uS10 family. As to quaternary structure, component of the mitochondrial ribosome small subunit (28S) which comprises a 12S rRNA and about 30 distinct proteins.

Its subcellular location is the mitochondrion. The polypeptide is Small ribosomal subunit protein uS10m (MRPS10) (Pongo abelii (Sumatran orangutan)).